Here is a 580-residue protein sequence, read N- to C-terminus: Putative multidrug export ATP-binding/permease protein YgaD (580 aa).

The Cytoplasmic portion of the chain corresponds to 1 to 17 (MGVMKRYMQFVKPYKKQ). Residues 18–38 (IFVTVLIGIVKFSIPLALPLL) form a helical membrane-spanning segment. An ABC transmembrane type-1 domain is found at 19 to 307 (FVTVLIGIVK…LINSSTTLTQ (289 aa)). The Extracellular portion of the chain corresponds to 39 to 57 (LKYVVDDIIQGGGTASDKT). Residues 58-78 (TSLFTIMAIMFALFLILRPPV) traverse the membrane as a helical segment. Topologically, residues 79–135 (EYYRQYFAQWTASKVLYDIRAKLFDHIQKLSLRFYANTRTGEVISRVINDVEQTKDF) are cytoplasmic. A helical transmembrane segment spans residues 136–156 (VITGLMNIWLDMLTILIVISI). Over 157–163 (MLTLDVK) the chain is Extracellular. A helical membrane pass occupies residues 164 to 184 (LTLISIVLFPLYGISVKYFYG). Topologically, residues 185-243 (RLRKLTRERSQALAQVQGHLHERIQGMPVIRSFAIEDHEQAQFNEKNGHFLDKAIRHTN) are cytoplasmic. The helical transmembrane segment at 244–263 (WNAKTFAVVNTITDLAPLIV) threads the bilayer. At 264-268 (IACAG) the chain is on the extracellular side. The helical transmembrane segment at 269-288 (YFVINGPLTVGTMVAFVGYI) threads the bilayer. Residues 289–580 (DRMYNPVRRL…KHLFTIQNLN (292 aa)) lie on the Cytoplasmic side of the membrane. The region spanning 341 to 576 (VEFQNVSFQY…ESQYKHLFTI (236 aa)) is the ABC transporter domain. 375-382 (GMSGGGKS) is a binding site for ATP.

Belongs to the ABC transporter superfamily. As to quaternary structure, homodimer.

The protein localises to the cell membrane. Its function is as follows. May be involved in multidrug export. Transmembrane domains (TMD) form a pore in the cell membrane and the ATP-binding domain (NBD) is responsible for energy generation. The sequence is that of Putative multidrug export ATP-binding/permease protein YgaD (ygaD) from Bacillus subtilis (strain 168).